The following is a 308-amino-acid chain: Coenzyme PQQ synthesis protein B (308 aa).

This sequence belongs to the PqqB family.

Its pathway is cofactor biosynthesis; pyrroloquinoline quinone biosynthesis. May be involved in the transport of PQQ or its precursor to the periplasm. This chain is Coenzyme PQQ synthesis protein B, found in Rhodopseudomonas palustris (strain TIE-1).